We begin with the raw amino-acid sequence, 187 residues long: Protein TIFY 11b (187 aa).

A Tify domain is found at 68 to 103 (ATAPAAPLTIFYGGRMVVFEDFPADKAAEVMRMASS). A Jas motif is present at residues 121 to 145 (PIMRKASLQRFFAKRKDRLAATTPY). A Nuclear localization signal motif is present at residues 123–130 (MRKASLQR). The tract at residues 139-168 (LAATTPYARPSPAETKASEPEEKKTPTSWL) is disordered. The span at 154–163 (KASEPEEKKT) shows a compositional bias: basic and acidic residues.

This sequence belongs to the TIFY/JAZ family. As to quaternary structure, interacts with COI1B in a coronatine-dependent manner. Coronatine is an analog of jasmonoyl isoleucine (JA-Ile). Ubiquitinated. Targeted for degradation by the SCF(COI1) E3 ubiquitin ligase-proteasome pathway during jasmonate signaling.

The protein resides in the nucleus. In terms of biological role, repressor of jasmonate responses. This Oryza sativa subsp. japonica (Rice) protein is Protein TIFY 11b.